Consider the following 140-residue polypeptide: Fluoride-specific ion channel FluC 1 (140 aa).

3 helical membrane passes run Ile-45–Leu-65, Phe-82–Ile-102, and Leu-106–Ile-126. Na(+)-binding residues include Gly-89 and Thr-92.

It belongs to the fluoride channel Fluc/FEX (TC 1.A.43) family.

It localises to the cell membrane. It catalyses the reaction fluoride(in) = fluoride(out). With respect to regulation, na(+) is not transported, but it plays an essential structural role and its presence is essential for fluoride channel function. Fluoride-specific ion channel. Important for reducing fluoride concentration in the cell, thus reducing its toxicity. In Methanospirillum hungatei JF-1 (strain ATCC 27890 / DSM 864 / NBRC 100397 / JF-1), this protein is Fluoride-specific ion channel FluC 1.